Here is a 764-residue protein sequence, read N- to C-terminus: Nucleolar transcription factor 1 (764 aa).

Residue M1 is modified to N-acetylmethionine. Residues 1-21 (MNGEADCPTDLEMAAPKGQDR) form a disordered region. 2 consecutive DNA-binding regions (HMG box) follow at residues 112-180 (PKKP…ARFR) and 196-264 (PEKP…RDYI). Phosphothreonine is present on T201. Phosphoserine is present on residues S273, S336, and S364. Positions 298–362 (TKPPPNSYSL…DYEVELLRFL (65 aa)) form a DNA-binding region, HMG box 3. Over residues 370 to 379 (QQRVLGEEKM) the composition is skewed to basic and acidic residues. The tract at residues 370 to 411 (QQRVLGEEKMLNINKKQTTSPASKKPSQEGGKGGSEKPKRPV) is disordered. A phosphoserine mark is found at S389, S412, S433, S435, S484, S495, S546, S584, and S638. DNA-binding regions (HMG box) lie at residues 407-475 (PKRP…GGER), 482-549 (PESP…SEMR), and 568-634 (KKPP…DLWV). The segment at 456 to 488 (YKAREAALKAQSERKPGGEREDRGKLPESPKRA) is disordered. Over residues 457–488 (KAREAALKAQSERKPGGEREDRGKLPESPKRA) the composition is skewed to basic and acidic residues. Residues 546 to 576 (SEMRAPPAATNSSKKMKFQGEPKKPPMNGYQ) form a disordered region. The tract at residues 648 to 764 (YISNKRKNMT…SGDSSDSDSN (117 aa)) is disordered. Positions 664–674 (PKSSRTTLQSK) are enriched in polar residues. Positions 677–745 (SEEDDDEEDD…DDDEDEDNES (69 aa)) are enriched in acidic residues. Low complexity predominate over residues 746–758 (EGSSSSSSSSGDS).

As to quaternary structure, homodimer. Part of Pol I pre-initiation complex (PIC), in which Pol I core assembles with RRN3 and promoter-bound UTBF and SL1/TIF-IB complex. Interacts with TOP2A in the context of Pol I complex. Interacts with TBP. Interacts with TAF1A. Interacts with PHF6. Interacts with CEBPA (isoform 1 and isoform 4). Interacts with DDX11. Interacts with NOP53. Interacts with RASL11A. Interacts with DHX33. Binds to IRS1 and PIK3CA. Interacts with ALKBH2. In terms of processing, phosphorylated and activated by PIK3CA.

The protein localises to the nucleus. It is found in the nucleolus. Recognizes the ribosomal RNA gene promoter and activates transcription mediated by RNA polymerase I through cooperative interactions with the transcription factor SL1/TIF-IB complex. It binds specifically to the upstream control element. This chain is Nucleolar transcription factor 1 (Ubtf), found in Rattus norvegicus (Rat).